A 110-amino-acid chain; its full sequence is Phosphoribosyl-ATP pyrophosphatase (110 aa).

The protein belongs to the PRA-PH family.

Its subcellular location is the cytoplasm. It catalyses the reaction 1-(5-phospho-beta-D-ribosyl)-ATP + H2O = 1-(5-phospho-beta-D-ribosyl)-5'-AMP + diphosphate + H(+). It functions in the pathway amino-acid biosynthesis; L-histidine biosynthesis; L-histidine from 5-phospho-alpha-D-ribose 1-diphosphate: step 2/9. In Pseudomonas syringae pv. syringae (strain B728a), this protein is Phosphoribosyl-ATP pyrophosphatase.